Here is a 311-residue protein sequence, read N- to C-terminus: Tricarboxylate transport protein, mitochondrial (311 aa).

Residues 1 to 13 (MAAPRGPRALSAA) constitute a propeptide, removed in mature form. Positions 1-21 (MAAPRGPRALSAAAPGSGKPK) are disordered. Solcar repeat units follow at residues 23-111 (THPG…LSNH), 122-208 (RRGL…LRNW), and 218-303 (MNPL…VVKL). A run of 3 helical transmembrane segments spans residues 29–46 (ILAGGLAGGIEICITFPT), 86–105 (GLSSLLYGSIPKAAVRFGMF), and 129–143 (LGAGVAEAVVVVCPM). Ser156 is modified (phosphoserine). 3 helical membrane passes run 183-202 (GLTATVLKQGSNQAIRFFVM), 224-241 (GVFGATAGAASVFGNTPL), and 278-297 (GTVPRLGRVCLDVAIVFIIY).

It belongs to the mitochondrial carrier (TC 2.A.29) family. Possesses a short cleavable presequence, which, however, is found to be dispensable both for targeting to mitochondria and insertion into the inner membrane. However, the presequence is required to keep SLC25A1 in a soluble state and thus in an import-competent state. Mature SLC25A1 lacking the presequence is prone to aggregation. Expressed minimally but ubiquitously throughout the adult brain. Detected at higher levels in the olfactory bulb, neocortex and cerebellum. Also expressed in a subset of large cells in the globus pallidus.

Its subcellular location is the mitochondrion inner membrane. It localises to the mitochondrion membrane. The catalysed reaction is (S)-malate(in) + citrate(out) = (S)-malate(out) + citrate(in). It catalyses the reaction D-threo-isocitrate(in) + citrate(out) = D-threo-isocitrate(out) + citrate(in). It carries out the reaction citrate(out) + succinate(in) = citrate(in) + succinate(out). The enzyme catalyses cis-aconitate(in) + citrate(out) = cis-aconitate(out) + citrate(in). The catalysed reaction is trans-aconitate(in) + citrate(out) = trans-aconitate(out) + citrate(in). It catalyses the reaction phosphoenolpyruvate(in) + citrate(out) = phosphoenolpyruvate(out) + citrate(in). It carries out the reaction maleate(in) + citrate(out) = maleate(out) + citrate(in). Mitochondrial electroneutral antiporter that exports citrate from the mitochondria into the cytosol in exchange for malate. Also able to mediate the exchange of citrate for isocitrate, phosphoenolpyruvate, cis-aconitate and to a lesser extent trans-aconitate, maleate and succinate. In the cytoplasm, citrate plays important roles in fatty acid and sterol synthesis, regulation of glycolysis, protein acetylation, and other physiopathological processes. In Mus musculus (Mouse), this protein is Tricarboxylate transport protein, mitochondrial.